The chain runs to 357 residues: Pheromone receptor 1 (357 aa).

The next 7 membrane-spanning stretches (helical) occupy residues 5-25 (ITPF…AWHI), 32-52 (LIML…NSMV), 67-90 (LSVR…ARKL), 110-130 (VIID…LMIV), 145-165 (WPMM…VIVV), 206-226 (LLLL…GTIA), and 268-288 (LILA…MFGL). The interval 338–357 (ANTSTKSEKSDIDMRGSEAA) is disordered. Residues 343–357 (KSEKSDIDMRGSEAA) show a composition bias toward basic and acidic residues.

The protein belongs to the G-protein coupled receptor 4 family.

Its subcellular location is the membrane. Its function is as follows. Receptor for the A2 pheromone, a prenylated mating factor. The polypeptide is Pheromone receptor 1 (PRA1) (Mycosarcoma maydis (Corn smut fungus)).